A 546-amino-acid polypeptide reads, in one-letter code: Cryptochrome DASH, chloroplastic/mitochondrial (546 aa).

Positions 4 to 151 (TRVVIWFRND…TMERHWGSTL (148 aa)) constitute a Photolyase/cryptochrome alpha/beta domain. The segment at 497–546 (PRRDFTEMGSPPGPRRGGGGGGRGRGRPGGSTPNRGTKARVASVYDTVYG) is disordered. Residues 511–525 (RRGGGGGGRGRGRPG) show a composition bias toward gly residues.

It belongs to the DNA photolyase class-1 family. It depends on FAD as a cofactor. (6R)-5,10-methylene-5,6,7,8-tetrahydrofolate serves as cofactor.

It localises to the plastid. It is found in the chloroplast. The protein resides in the mitochondrion. May have a photoreceptor function. Binds ss- and ds-DNA in a sequence non-specific manner, lacks photolyase activity. The protein is Cryptochrome DASH, chloroplastic/mitochondrial of Ostreococcus tauri.